Consider the following 464-residue polypeptide: Protein transport protein HofB homolog (464 aa).

264–271 (GPTGSGKS) is an ATP binding site.

It belongs to the GSP E family.

The sequence is that of Protein transport protein HofB homolog (hofB) from Haemophilus influenzae (strain ATCC 51907 / DSM 11121 / KW20 / Rd).